Consider the following 465-residue polypeptide: Glutamyl-tRNA reductase 2 (465 aa).

Substrate is bound by residues 62 to 65 (TCNR), S122, 127 to 129 (EGQ), and Q133. C63 acts as the Nucleophile in catalysis. 204–209 (GAGKMG) contributes to the NADP(+) binding site.

The protein belongs to the glutamyl-tRNA reductase family.

Its subcellular location is the plastid. It is found in the chloroplast. It catalyses the reaction (S)-4-amino-5-oxopentanoate + tRNA(Glu) + NADP(+) = L-glutamyl-tRNA(Glu) + NADPH + H(+). The protein operates within porphyrin-containing compound metabolism; protoporphyrin-IX biosynthesis; 5-aminolevulinate from L-glutamyl-tRNA(Glu): step 1/2. Its function is as follows. Catalyzes the NADPH-dependent reduction of glutamyl-tRNA(Glu) to glutamate 1-semialdehyde (GSA). This is Glutamyl-tRNA reductase 2 (HEMA2) from Hordeum vulgare (Barley).